Consider the following 482-residue polypeptide: Glutamyl-tRNA(Gln) amidotransferase subunit A (482 aa).

Active-site charge relay system residues include Lys75 and Ser150. Residue Ser174 is the Acyl-ester intermediate of the active site.

It belongs to the amidase family. GatA subfamily. Heterotrimer of A, B and C subunits.

The enzyme catalyses L-glutamyl-tRNA(Gln) + L-glutamine + ATP + H2O = L-glutaminyl-tRNA(Gln) + L-glutamate + ADP + phosphate + H(+). Functionally, allows the formation of correctly charged Gln-tRNA(Gln) through the transamidation of misacylated Glu-tRNA(Gln) in organisms which lack glutaminyl-tRNA synthetase. The reaction takes place in the presence of glutamine and ATP through an activated gamma-phospho-Glu-tRNA(Gln). This Acaryochloris marina (strain MBIC 11017) protein is Glutamyl-tRNA(Gln) amidotransferase subunit A.